Consider the following 770-residue polypeptide: MAMGKYSRVDGKKSSSYGLTITIVLLLSLCLVGTWMFMSSWSAPADSAGYSSTDTAKDVSKNDLRKEEGDRDPKNFSDEKNEENEAATENNQVKTDSENSAEGNQVNESSGEKTEAGEERKESDDNNGDGDGEKEKNVKEVGSESDETTQKEKTQLEESTEENKSEDGNGNEEKAEENASETEESTEKSSKEVFPAGDQAEITKESSTGDGAWSTQLVESQNEKKAQQSSISKDQSSYGWKTCNVTAGPDYIPCLDNWQAIKKLHTTMHYEHRERHCPEESPHCLVSLPDGYKRSIKWPKSREKIWYNNVPHTKLAEIKGHQNWVKMSGEHLTFPGGGTQFKNGALHYIDFIQQSHPAIAWGNRTRVILDVGCGVASFGGYLFERDVLALSFAPKDEHEAQVQFALERGIPAMLNVMGTKRLPFPGSVFDLIHCARCRVPWHIEGGKLLLELNRALRPGGFFVWSATPVYRKNEEDSGIWKAMSELTKAMCWKLVTIKKDKLNEVGAAIYQKPTSNKCYNKRPQNEPPLCKDSDDQNAAWNVPLEACMHKVTEDSSKRGAVWPNMWPERVETAPEWLDSQEGVYGKPAPEDFTADQEKWKTIVSKAYLNDMGIDWSNVRNVMDMRAVYGGFAAALKDLKLWVMNVVPVDAPDTLPIIYERGLFGIYHDWCESFNTYPRTYDLLHADHLFSTLRKRCNLVSVMAEIDRILRPQGTFIIRDDMETLGEVEKMVKSMKWKVKMTQSKDNEGLLSIEKSWWRPEETETIKSAIA.

Residues 1 to 17 lie on the Cytoplasmic side of the membrane; that stretch reads MAMGKYSRVDGKKSSSY. The helical; Signal-anchor for type II membrane protein transmembrane segment at 18–38 threads the bilayer; sequence GLTITIVLLLSLCLVGTWMFM. Over 39–770 the chain is Lumenal; the sequence is SSWSAPADSA…ETETIKSAIA (732 aa). Residues 44–238 form a disordered region; it reads PADSAGYSST…SSISKDQSSY (195 aa). Over residues 55–79 the composition is skewed to basic and acidic residues; the sequence is TAKDVSKNDLRKEEGDRDPKNFSDE. 2 N-linked (GlcNAc...) asparagine glycosylation sites follow: Asn-75 and Asn-107. The span at 92 to 109 shows a compositional bias: polar residues; sequence QVKTDSENSAEGNQVNES. 2 stretches are compositionally biased toward basic and acidic residues: residues 110–124 and 131–177; these read SGEKTEAGEERKESD and DGEK…KAEE. N-linked (GlcNAc...) asparagine glycans are attached at residues Asn-163 and Asn-178. Composition is skewed to polar residues over residues 205–220 and 227–238; these read ESSTGDGAWSTQLVES and QQSSISKDQSSY. Asn-244 and Asn-363 each carry an N-linked (GlcNAc...) asparagine glycan.

The protein belongs to the methyltransferase superfamily.

It localises to the golgi apparatus membrane. This Arabidopsis thaliana (Mouse-ear cress) protein is Probable methyltransferase PMT25.